The sequence spans 778 residues: Serine/threonine-protein kinase BRSK1 (778 aa).

Residues Met1–Ser12 are compositionally biased toward gly residues. The interval Met1 to Gln29 is disordered. The Protein kinase domain occupies Tyr34–Tyr285. Residues Leu40–Val48 and Lys63 contribute to the ATP site. Asp156 acts as the Proton acceptor in catalysis. Thr189 is subject to Phosphothreonine; by LKB1. The UBA domain maps to Glu314 to Asp356. Over residues Pro362–Asp383 the composition is skewed to basic and acidic residues. A disordered region spans residues Pro362 to Ala548. Ser399, Ser443, Ser447, and Ser450 each carry phosphoserine. A compositionally biased stretch (low complexity) spans Ser430 to Pro457. Omega-N-methylarginine occurs at positions 466, 481, 484, and 498. Over residues Gln491–Ser508 the composition is skewed to pro residues. The residue at position 508 (Ser508) is a Phosphoserine. The span at Pro509–Gly533 shows a compositional bias: low complexity. Residue Arg525 is modified to Omega-N-methylarginine. Residues Thr529 and Thr535 each carry the phosphothreonine modification. The residue at position 550 (Arg550) is an Omega-N-methylarginine. A disordered region spans residues Phe560 to Pro588. Thr583 bears the Phosphothreonine mark. Residues Ser586, Ser587, and Ser601 each carry the phosphoserine modification. A disordered region spans residues Gln719 to Pro778.

It belongs to the protein kinase superfamily. CAMK Ser/Thr protein kinase family. SNF1 subfamily. The cofactor is Mg(2+). Phosphorylated at Thr-189 by STK11/LKB1 in complex with STE20-related adapter-alpha (STRADA) pseudo kinase and CAB39. Not phosphorylated at Thr-189 by CaMKK2. In contrast, it is phosphorylated and activated by CaMKK1. May be inactivated via dephosphorylation of Thr-189 by PP2C. As to expression, present in the gray matter of the brain and spinal cord (at protein level). Expressed in the nervous system, distributed within the brain and spinal cord of embryonic and postnatal animals.

It localises to the cytoplasm. The protein resides in the nucleus. It is found in the cytoskeleton. Its subcellular location is the microtubule organizing center. The protein localises to the centrosome. It localises to the synapse. The protein resides in the presynaptic active zone. It is found in the cytoplasmic vesicle. Its subcellular location is the secretory vesicle. The protein localises to the synaptic vesicle. The enzyme catalyses L-seryl-[protein] + ATP = O-phospho-L-seryl-[protein] + ADP + H(+). It carries out the reaction L-threonyl-[protein] + ATP = O-phospho-L-threonyl-[protein] + ADP + H(+). The catalysed reaction is L-seryl-[tau protein] + ATP = O-phospho-L-seryl-[tau protein] + ADP + H(+). It catalyses the reaction L-threonyl-[tau protein] + ATP = O-phospho-L-threonyl-[tau protein] + ADP + H(+). Its activity is regulated as follows. Activated by phosphorylation on Thr-189 by STK11/LKB1. Serine/threonine-protein kinase that plays a key role in polarization of neurons and centrosome duplication. Phosphorylates CDC25B, CDC25C, MAPT/TAU, RIMS1, TUBG1, TUBG2 and WEE1. Following phosphorylation and activation by STK11/LKB1, acts as a key regulator of polarization of cortical neurons, probably by mediating phosphorylation of microtubule-associated proteins such as MAPT/TAU at 'Thr-504' and 'Ser-554'. Also regulates neuron polarization by mediating phosphorylation of WEE1 at 'Ser-642' in postmitotic neurons, leading to down-regulate WEE1 activity in polarized neurons. In neurons, localizes to synaptic vesicles and plays a role in neurotransmitter release, possibly by phosphorylating RIMS1. Also acts as a positive regulator of centrosome duplication by mediating phosphorylation of gamma-tubulin (TUBG1 and TUBG2) at 'Ser-131', leading to translocation of gamma-tubulin and its associated proteins to the centrosome. Involved in the UV-induced DNA damage checkpoint response, probably by inhibiting CDK1 activity through phosphorylation and activation of WEE1, and inhibition of CDC25B and CDC25C. This chain is Serine/threonine-protein kinase BRSK1 (Brsk1), found in Mus musculus (Mouse).